The sequence spans 430 residues: Aspartate aminotransferase, mitochondrial (430 aa).

A mitochondrion-targeting transit peptide spans 1–29 (MALLHSGRVLPGIAAAFHPGLAAAASARA). Thr48 carries the post-translational modification Phosphothreonine. Position 59 is an N6-acetyllysine (Lys59). Gly65 lines the substrate pocket. Lys73 bears the N6-acetyllysine; alternate mark. An N6-succinyllysine; alternate modification is found at Lys73. Lys82 carries the post-translational modification N6-acetyllysine. Lys90 carries the post-translational modification N6-acetyllysine; alternate. N6-succinyllysine; alternate is present on Lys90. At Tyr96 the chain carries 3'-nitrotyrosine; alternate. Tyr96 is subject to Phosphotyrosine; alternate. An N6-acetyllysine; alternate mark is found at Lys107 and Lys122. An N6-succinyllysine; alternate mark is found at Lys107 and Lys122. Ser143 is subject to Phosphoserine. N6-acetyllysine; alternate is present on Lys159. Lys159 carries the N6-succinyllysine; alternate modification. Trp162 is a binding site for substrate. Lys185 is subject to N6-acetyllysine; alternate. Lys185 is modified (N6-succinyllysine; alternate). A substrate-binding site is contributed by Asn215. At Lys227 the chain carries N6-succinyllysine. The residue at position 234 (Lys234) is an N6-acetyllysine. An N6-acetyllysine; alternate mark is found at Lys279 and Lys296. An N6-(pyridoxal phosphate)lysine; alternate modification is found at Lys279. Position 296 is an N6-succinyllysine; alternate (Lys296). Lys302 is subject to N6-acetyllysine. At Lys309 the chain carries N6-acetyllysine; alternate. Lys309 is modified (N6-succinyllysine; alternate). Arg313 is subject to Asymmetric dimethylarginine. A Phosphothreonine modification is found at Thr333. Residue Lys338 is modified to N6-acetyllysine; alternate. At Lys338 the chain carries N6-succinyllysine; alternate. An N6-acetyllysine modification is found at Lys345. The residue at position 363 (Lys363) is an N6-acetyllysine; alternate. Lys363 carries the N6-succinyllysine; alternate modification. N6-acetyllysine occurs at positions 364 and 387. Residues Lys396 and Lys404 each carry the N6-acetyllysine; alternate modification. An N6-succinyllysine; alternate mark is found at Lys396 and Lys404. Arg407 contributes to the substrate binding site.

It belongs to the class-I pyridoxal-phosphate-dependent aminotransferase family. As to quaternary structure, homodimer. Requires pyridoxal 5'-phosphate as cofactor.

The protein resides in the mitochondrion matrix. The protein localises to the cell membrane. The enzyme catalyses L-aspartate + 2-oxoglutarate = oxaloacetate + L-glutamate. It carries out the reaction L-kynurenine + 2-oxoglutarate = kynurenate + L-glutamate + H2O. Its function is as follows. Catalyzes the irreversible transamination of the L-tryptophan metabolite L-kynurenine to form kynurenic acid (KA). As a member of the malate-aspartate shuttle, it has a key role in the intracellular NAD(H) redox balance. Is important for metabolite exchange between mitochondria and cytosol, and for amino acid metabolism. Facilitates cellular uptake of long-chain free fatty acids. This is Aspartate aminotransferase, mitochondrial from Homo sapiens (Human).